Reading from the N-terminus, the 109-residue chain is Putative antitoxin HigA3 (109 aa).

One can recognise an HTH cro/C1-type domain in the interval Leu-41 to Val-97. The segment at residues Gln-53 to Ser-72 is a DNA-binding region (H-T-H motif).

Functionally, putative antitoxin component of a type II toxin-antitoxin (TA) system. Its cognate toxin would be HigB3. The sequence is that of Putative antitoxin HigA3 from Mycobacterium tuberculosis (strain ATCC 25618 / H37Rv).